The chain runs to 448 residues: Tubulin alpha chain (448 aa).

GTP contacts are provided by Gln12, Glu73, Ser142, Gly146, Thr147, Thr181, Asn208, and Asn230. Glu73 provides a ligand contact to Mg(2+). Glu256 is a catalytic residue.

Belongs to the tubulin family. As to quaternary structure, dimer of alpha and beta chains. A typical microtubule is a hollow water-filled tube with an outer diameter of 25 nm and an inner diameter of 15 nM. Alpha-beta heterodimers associate head-to-tail to form protofilaments running lengthwise along the microtubule wall with the beta-tubulin subunit facing the microtubule plus end conferring a structural polarity. Microtubules usually have 13 protofilaments but different protofilament numbers can be found in some organisms and specialized cells. Mg(2+) serves as cofactor.

It is found in the cytoplasm. Its subcellular location is the cytoskeleton. It catalyses the reaction GTP + H2O = GDP + phosphate + H(+). Its function is as follows. Tubulin is the major constituent of microtubules, a cylinder consisting of laterally associated linear protofilaments composed of alpha- and beta-tubulin heterodimers. Microtubules grow by the addition of GTP-tubulin dimers to the microtubule end, where a stabilizing cap forms. Below the cap, tubulin dimers are in GDP-bound state, owing to GTPase activity of alpha-tubulin. This Eremothecium gossypii (strain ATCC 10895 / CBS 109.51 / FGSC 9923 / NRRL Y-1056) (Yeast) protein is Tubulin alpha chain (TUB1).